Here is a 671-residue protein sequence, read N- to C-terminus: DNA ligase (671 aa).

Residues Asp32–Asp36, Ser81–Leu82, and Glu113 each bind NAD(+). Lys115 (N6-AMP-lysine intermediate) is an active-site residue. The NAD(+) site is built by Arg136, Glu173, Lys290, and Lys314. Positions 408, 411, 426, and 432 each coordinate Zn(2+). The BRCT domain occupies Glu593–Ala671.

The protein belongs to the NAD-dependent DNA ligase family. LigA subfamily. Mg(2+) serves as cofactor. It depends on Mn(2+) as a cofactor.

It catalyses the reaction NAD(+) + (deoxyribonucleotide)n-3'-hydroxyl + 5'-phospho-(deoxyribonucleotide)m = (deoxyribonucleotide)n+m + AMP + beta-nicotinamide D-nucleotide.. Its function is as follows. DNA ligase that catalyzes the formation of phosphodiester linkages between 5'-phosphoryl and 3'-hydroxyl groups in double-stranded DNA using NAD as a coenzyme and as the energy source for the reaction. It is essential for DNA replication and repair of damaged DNA. This chain is DNA ligase, found in Salmonella typhimurium (strain LT2 / SGSC1412 / ATCC 700720).